The following is a 213-amino-acid chain: Thymidylate kinase (213 aa).

10 to 17 (GLEGAGKT) lines the ATP pocket.

It belongs to the thymidylate kinase family.

The enzyme catalyses dTMP + ATP = dTDP + ADP. Functionally, phosphorylation of dTMP to form dTDP in both de novo and salvage pathways of dTTP synthesis. This Escherichia coli O1:K1 / APEC protein is Thymidylate kinase.